The chain runs to 498 residues: Lipase 3 (498 aa).

Cys-60 and Cys-91 form a disulfide bridge. A glycan (N-linked (GlcNAc...) asparagine) is linked at Asn-193. The active-site Acyl-ester intermediate is Ser-200. N-linked (GlcNAc...) asparagine glycosylation occurs at Asn-384. His-409 serves as the catalytic Charge relay system. N-linked (GlcNAc...) asparagine glycosylation is present at Asn-418.

Belongs to the type-B carboxylesterase/lipase family.

It catalyses the reaction a triacylglycerol + H2O = a diacylglycerol + a fatty acid + H(+). This chain is Lipase 3 (LIP3), found in Yarrowia lipolytica (strain CLIB 122 / E 150) (Yeast).